Consider the following 65-residue polypeptide: Large ribosomal subunit protein uL29 (65 aa).

The protein belongs to the universal ribosomal protein uL29 family.

The polypeptide is Large ribosomal subunit protein uL29 (Psychrobacter arcticus (strain DSM 17307 / VKM B-2377 / 273-4)).